The chain runs to 977 residues: Poly(ADP-ribose) glycohydrolase (977 aa).

The segment at 1 to 69 (MSAGPGCEPC…LGRAGQHRGS (69 aa)) is disordered. An A-domain region spans residues 1–457 (MSAGPGCEPC…LSPDKKWLGT (457 aa)). The short motif at 10 to 16 (CTKRPRW) is the Nuclear localization signal element. The span at 17–29 (DAAATSPPAASDA) shows a compositional bias: low complexity. Ser69 carries the phosphoserine modification. A PIP-box (PCNA interacting peptide) motif is present at residues 77-84 (QKTITSWM). Phosphoserine occurs at positions 138 and 198. Positions 184-407 (SNANVDQSSP…CRNSKQHGRK (224 aa)) are disordered. 2 stretches are compositionally biased toward basic and acidic residues: residues 192 to 207 (SPKDDHSDTNSEESRD) and 223 to 234 (TMEDEQGREARS). At Thr200 the chain carries Phosphothreonine. Ser262, Ser265, Ser287, Ser292, Ser299, Ser303, and Ser317 each carry phosphoserine. Over residues 280–291 (NRLNRQESSLGN) the composition is skewed to polar residues. Acidic residues predominate over residues 317–332 (SEADEETSPGFDEQED). Over residues 333–343 (SSSAQTANKPS) the composition is skewed to polar residues. Lys341 is modified (N6-acetyllysine). Basic and acidic residues predominate over residues 346–356 (QPREADTELRK). Ser449 is subject to Phosphoserine. A catalytic region spans residues 611–796 (QPIPLLKQKM…TEQYSEYTGY (186 aa)). Position 727 to 728 (727 to 728 (IE)) interacts with substrate. Asp738 is a catalytic residue. The substrate site is built by Asn741 and Gln755. Active-site residues include Glu756 and Glu757. Substrate-binding positions include Tyr796 and 870–875 (NWGCGA).

Belongs to the poly(ADP-ribose) glycohydrolase family. Interacts with PCNA. Interacts with NUDT5.

Its subcellular location is the nucleus. The enzyme catalyses [(1''-&gt;2')-ADP-alpha-D-ribose](n) + H2O = [(1''-&gt;2')-ADP-alpha-D-ribose](n-1) + ADP-D-ribose. Its function is as follows. Poly(ADP-ribose) glycohydrolase that degrades poly(ADP-ribose) by hydrolyzing the ribose-ribose bonds present in poly(ADP-ribose). PARG acts both as an endo- and exoglycosidase, releasing poly(ADP-ribose) of different length as well as ADP-ribose monomers. It is however unable to cleave the ester bond between the terminal ADP-ribose and ADP-ribosylated residues, leaving proteins that are mono-ADP-ribosylated. Poly(ADP-ribose) is synthesized after DNA damage is only present transiently and is rapidly degraded by PARG. Required to prevent detrimental accumulation of poly(ADP-ribose) upon prolonged replicative stress, while it is not required for recovery from transient replicative stress. Responsible for the prevalence of mono-ADP-ribosylated proteins in cells, thanks to its ability to degrade poly(ADP-ribose) without cleaving the terminal protein-ribose bond. Required for retinoid acid-dependent gene transactivation, probably by removing poly(ADP-ribose) from histone demethylase KDM4D, allowing chromatin derepression at RAR-dependent gene promoters. Involved in the synthesis of ATP in the nucleus, together with PARP1, NMNAT1 and NUDT5. Nuclear ATP generation is required for extensive chromatin remodeling events that are energy-consuming. This Bos taurus (Bovine) protein is Poly(ADP-ribose) glycohydrolase.